Consider the following 192-residue polypeptide: Ciliary microtubule inner protein 3 (192 aa).

Positions 24–108 (RAGAEGGPSL…SGQKVKAPHR (85 aa)) are disordered. Over residues 55 to 64 (APRRPPRPRT) the composition is skewed to basic residues.

The protein belongs to the CIMIP3-like family. In terms of tissue distribution, detected in the sperm flagellum (at protein level).

The protein localises to the cytoplasm. The protein resides in the cytoskeleton. Its subcellular location is the flagellum axoneme. This chain is Ciliary microtubule inner protein 3, found in Bos taurus (Bovine).